The following is a 196-amino-acid chain: ATP-dependent Clp protease proteolytic subunit (196 aa).

Ser101 (nucleophile) is an active-site residue. His126 is an active-site residue.

It belongs to the peptidase S14 family. In terms of assembly, component of the chloroplastic Clp protease core complex.

It localises to the plastid. It is found in the chloroplast stroma. The enzyme catalyses Hydrolysis of proteins to small peptides in the presence of ATP and magnesium. alpha-casein is the usual test substrate. In the absence of ATP, only oligopeptides shorter than five residues are hydrolyzed (such as succinyl-Leu-Tyr-|-NHMec, and Leu-Tyr-Leu-|-Tyr-Trp, in which cleavage of the -Tyr-|-Leu- and -Tyr-|-Trp bonds also occurs).. Functionally, cleaves peptides in various proteins in a process that requires ATP hydrolysis. Has a chymotrypsin-like activity. Plays a major role in the degradation of misfolded proteins. The polypeptide is ATP-dependent Clp protease proteolytic subunit (Nicotiana tabacum (Common tobacco)).